A 108-amino-acid polypeptide reads, in one-letter code: uncharacterized protein (108 aa).

2 stretches are compositionally biased toward basic and acidic residues: residues 1–15 (MSEA…EVLV) and 53–69 (KLKD…RNSE). The segment at 1–77 (MSEAKDNGSR…SELDQDEEDK (77 aa)) is disordered.

This is an uncharacterized protein from Homo sapiens (Human).